A 381-amino-acid chain; its full sequence is tRNA-specific 2-thiouridylase MnmA (381 aa).

ATP-binding positions include 26 to 33 and leucine 52; that span reads AMSGGVDS. Residue cysteine 120 is the Nucleophile of the active site. A disulfide bond links cysteine 120 and cysteine 217. Residue glycine 144 coordinates ATP. The tract at residues 166 to 168 is interaction with tRNA; it reads RDQ. The active-site Cysteine persulfide intermediate is the cysteine 217.

Belongs to the MnmA/TRMU family.

It is found in the cytoplasm. It carries out the reaction S-sulfanyl-L-cysteinyl-[protein] + uridine(34) in tRNA + AH2 + ATP = 2-thiouridine(34) in tRNA + L-cysteinyl-[protein] + A + AMP + diphosphate + H(+). Functionally, catalyzes the 2-thiolation of uridine at the wobble position (U34) of tRNA, leading to the formation of s(2)U34. In Ruegeria sp. (strain TM1040) (Silicibacter sp.), this protein is tRNA-specific 2-thiouridylase MnmA.